The following is a 732-amino-acid chain: Ets DNA-binding protein pokkuri (732 aa).

Positions 33-117 (SSQLAELKTQ…NVLQMLIIES (85 aa)) constitute a PNT domain. The tract at residues 133 to 295 (SRYPLSPHSH…PPGTPILKDI (163 aa)) is disordered. The span at 141–157 (SHPPTPTWPPLNAPPEN) shows a compositional bias: pro residues. Residues 176–193 (NSVTLSPPPSVDSQASSP) are compositionally biased toward polar residues. Residues 205 to 240 (GAAPGSAGGSAPAAGGATNTSNPTSSSASSTGSNGS) are compositionally biased toward low complexity. Positions 396-479 (RLLWDFLQQL…QGERHCYQFL (84 aa)) form a DNA-binding region, ETS. 3 disordered regions span residues 496–548 (QSTP…NGPM), 590–647 (GPPP…TATS), and 674–732 (VAAS…HMQQ). Residues 506-539 (SPSMPQGSSQAPGSPAGQNWNPQQQSQQQQQSPQ) show a composition bias toward low complexity. Ser543 bears the Phosphoserine mark. Residues 637–647 (LSVSSKSTATS) are compositionally biased toward polar residues. A phosphoserine mark is found at Ser677, Ser682, and Ser696. Over residues 690 to 709 (AGASNASSSPRPMDQASEQA) the composition is skewed to polar residues.

It belongs to the ETS family. In terms of processing, phosphorylated in response to MAPK signaling. May be phosphorylated by rl. As to expression, expressed in R7 and cone cells of the eye.

It is found in the nucleus. Functionally, ets-related protein that functions as a negative regulator of photoreceptor development acting antagonistically to pnt and the proneural signal mediated by RAS. It acts upstream of SINA to inhibit R7 development. The chain is Ets DNA-binding protein pokkuri (aop) from Drosophila melanogaster (Fruit fly).